The following is a 76-amino-acid chain: Protein MATERNALLY EXPRESSED GENE 4 (76 aa).

The signal sequence occupies residues 1–27 (MEYRKRVDALVFFSLLLLGYFAAHAHG). Residues cysteine 53 and cysteine 75 are joined by a disulfide bond.

Belongs to the MEG family. In terms of tissue distribution, expressed exclusively in endosperm.

This is Protein MATERNALLY EXPRESSED GENE 4 (MEG4) from Zea mays (Maize).